We begin with the raw amino-acid sequence, 154 residues long: Pro-corazonin (154 aa).

An N-terminal signal peptide occupies residues 1–19; it reads MLRLLLLPLFLFTLSMCMG. The residue at position 20 (Gln-20) is a Pyrrolidone carboxylic acid. Position 30 is an asparagine amide (Asn-30). A propeptide spanning residues 70–154 is cleaved from the precursor; it reads LERCLSQLQR…SAEPNVFGKH (85 aa). Residues 91-119 are disordered; that stretch reads DFNANRVDPDPENSAHPRLSNSNGENVLY. The segment covering 109 to 119 has biased composition (polar residues); that stretch reads LSNSNGENVLY.

This sequence belongs to the corazonin family. In terms of tissue distribution, from late embryo to larva, expression is consistently detected in three neuronal groups: dorso-lateral neurons (DL), dorso-medial neurons (DM), and neurons in the ventral nerve cord (vCrz). Both the vCrz and DM groups die via programmed cell death during metamorphosis, whereas the DL neurons persist to adulthood. In adults, expression is seen in a cluster of six to eight neurons per lobe in the pars lateralis (DLP), in numerous neuronal cells in the optic lobes, and in a novel group of four abdominal ganglionic neurons present only in males (ms-aCrz). Projections of the ms-aCrz neurons terminate within the ventral nerve cord, implying a role as interneurons. Terminals of the DLP neurons are found in the retrocerebral complex that produces juvenile hormone and adipokinetic hormone, located in the vicinity of terminals emanating from PDF-containing pacemaking neurons.

It localises to the secreted. Cardioactive peptide. Corazonin is probably involved in the physiological regulation of the heart beat. Clock (Clk) and cycle (cyc) proteins negatively regulate Crz transcription in a cell-specific manner. The protein is Pro-corazonin (Crz) of Drosophila melanogaster (Fruit fly).